Reading from the N-terminus, the 456-residue chain is uncharacterized protein (456 aa).

A TRAM domain is found at 2 to 60 (AMRKGKEYELNIEEIEFPSMGIAYHEGLKVYVKHGIPGQKVLARITTKKKDHAKGKIIE). Cys-73, Cys-79, Cys-82, and Cys-162 together coordinate [4Fe-4S] cluster. S-adenosyl-L-methionine-binding residues include Gln-288, Tyr-317, Glu-338, and Asp-383. The active-site Nucleophile is Cys-410.

This sequence belongs to the class I-like SAM-binding methyltransferase superfamily. RNA M5U methyltransferase family.

This is an uncharacterized protein from Clostridium tetani (strain Massachusetts / E88).